Reading from the N-terminus, the 396-residue chain is L-cysteine desulfidase (396 aa).

Cys23 (proton acceptor) is an active-site residue. Positions 287, 329, and 336 each coordinate [4Fe-4S] cluster.

It belongs to the L-cysteine desulfidase family. Homotrimer. Requires [4Fe-4S] cluster as cofactor.

It catalyses the reaction L-cysteine + H2O = hydrogen sulfide + pyruvate + NH4(+) + H(+). Catalyzes the cleavage of L-cysteine to form 2-aminoprop-2-enoate and sulfide. The former then spontaneously hydrolyzes to pyruvate and NH(3). May be responsible for the production of sulfide required for the biosynthesis of iron-sulfur centers in this archaea. This is L-cysteine desulfidase from Methanococcus maripaludis (strain DSM 14266 / JCM 13030 / NBRC 101832 / S2 / LL).